The chain runs to 210 residues: Syntaxin-binding protein 6 (210 aa).

The residue at position 2 (S2) is an N-acetylserine. The v-SNARE coiled-coil homology domain occupies 151-210 (GNSILHSAADSVTSAVQKASQALNERGERLGRAEEKTEDLKNSAQQFAETAHKLAMKHKC).

In terms of assembly, part of a ternary complex containing SNAP25 and STX1A that can be dissociated by NAPA and NSF. Interacts with STX4A. Detected at low levels in brain, and at very low levels in heart, adrenal gland, testis, liver and kidney.

It is found in the cytoplasm. Its subcellular location is the membrane. In terms of biological role, forms non-fusogenic complexes with SNAP25 and STX1A and may thereby modulate the formation of functional SNARE complexes and exocytosis. The sequence is that of Syntaxin-binding protein 6 (STXBP6) from Homo sapiens (Human).